The sequence spans 482 residues: MARALMIQGAGSDVGKSLIVAGLARAFTRRGLRVLPFKPQNMSNNAAVTVDGGEIGRAQALQALAAGVEPHTDMNPVLLKPETDVGAQVVVHGKRIATARAREYAAMKPSLMGAVLESFERLKARADLVLVEGAGSPAEVNLRKADIANMGFARKADVPVVLIGDIDRGGVIAQLVGIKTVIDPDDAAMIQGFVINKFRGDPTLFDDGYKLIEAKTAWRGFGVLPWFARAGELPAEDALGLSDARKPGQCKIACLALSRIANFDDLDPLKLEAAVDLVMVRPGEAIPGDVRLVIIPGSKSTRGDLAFLRAQGWDIDLLAHYRRGGHVLGLCGGYQMLGRSVADPDGIEGPAGDTPGLGLLDVQTVMSPQKTLTRVTAVHAATNQPIQAYEIHIGRTDGPDRARPFAKLNGEPEGAISSDGRVQGSYLHGLFTSDDFRKAFLTKLDIPAGDEPYHSRVESALDALADHIEKHLDVEGLLSLAR.

The region spanning 249 to 436 is the GATase cobBQ-type domain; that stretch reads QCKIACLALS…LHGLFTSDDF (188 aa). Cysteine 331 serves as the catalytic Nucleophile. The active site involves histidine 428.

The protein belongs to the CobB/CobQ family. CobQ subfamily.

Its pathway is cofactor biosynthesis; adenosylcobalamin biosynthesis. Functionally, catalyzes amidations at positions B, D, E, and G on adenosylcobyrinic A,C-diamide. NH(2) groups are provided by glutamine, and one molecule of ATP is hydrogenolyzed for each amidation. The protein is Cobyric acid synthase of Bradyrhizobium diazoefficiens (strain JCM 10833 / BCRC 13528 / IAM 13628 / NBRC 14792 / USDA 110).